Here is a 331-residue protein sequence, read N- to C-terminus: D-lactate dehydrogenase (331 aa).

Residues 155 to 156, Asp-175, 206 to 207, Asn-212, 233 to 235, and Asp-259 each bind NAD(+); these read HI, VP, and AAR. Residue Arg-235 is part of the active site. Residue Glu-264 is part of the active site. Residue His-296 is the Proton donor of the active site.

The protein belongs to the D-isomer specific 2-hydroxyacid dehydrogenase family. Homodimer.

It catalyses the reaction (R)-lactate + NAD(+) = pyruvate + NADH + H(+). In Leuconostoc mesenteroides subsp. cremoris, this protein is D-lactate dehydrogenase.